The following is a 180-amino-acid chain: Putative phycocyanobilin lyase CpcS 2 (180 aa).

The protein belongs to the CpcS/CpeS biliprotein lyase family.

Functionally, covalently attaches a chromophore to Cys residue(s) of phycobiliproteins (Potential). In vitro does not act as a chromophore lyase for ApcA1, ApcA2, ApcB, ApcD, ApcF, CpcB or PecB, the lyase activity is therefore unsure. In Nostoc sp. (strain PCC 7120 / SAG 25.82 / UTEX 2576), this protein is Putative phycocyanobilin lyase CpcS 2 (cpeS2).